The sequence spans 539 residues: CTP synthase (539 aa).

The segment at 1–267 (MTKYIFVTGG…DQKVCDFLHI (267 aa)) is amidoligase domain. Residue Ser-13 participates in CTP binding. Ser-13 is a UTP binding site. 14–19 (SLGKGI) provides a ligand contact to ATP. Tyr-54 is an L-glutamine binding site. ATP is bound at residue Asp-71. Residues Asp-71 and Glu-141 each contribute to the Mg(2+) site. CTP-binding positions include 148–150 (DME), 188–193 (KTKPTQ), and Lys-224. Residues 188-193 (KTKPTQ) and Lys-224 each bind UTP. Residues 294–537 (KITLVGKYVE…IGAASGLPEQ (244 aa)) enclose the Glutamine amidotransferase type-1 domain. Position 356 (Gly-356) interacts with L-glutamine. The Nucleophile; for glutamine hydrolysis role is filled by Cys-383. L-glutamine is bound by residues 384–387 (LGMQ), Glu-407, and Arg-465. Catalysis depends on residues His-510 and Glu-512.

This sequence belongs to the CTP synthase family. As to quaternary structure, homotetramer.

The enzyme catalyses UTP + L-glutamine + ATP + H2O = CTP + L-glutamate + ADP + phosphate + 2 H(+). It carries out the reaction L-glutamine + H2O = L-glutamate + NH4(+). It catalyses the reaction UTP + NH4(+) + ATP = CTP + ADP + phosphate + 2 H(+). It functions in the pathway pyrimidine metabolism; CTP biosynthesis via de novo pathway; CTP from UDP: step 2/2. Allosterically activated by GTP, when glutamine is the substrate; GTP has no effect on the reaction when ammonia is the substrate. The allosteric effector GTP functions by stabilizing the protein conformation that binds the tetrahedral intermediate(s) formed during glutamine hydrolysis. Inhibited by the product CTP, via allosteric rather than competitive inhibition. Functionally, catalyzes the ATP-dependent amination of UTP to CTP with either L-glutamine or ammonia as the source of nitrogen. Regulates intracellular CTP levels through interactions with the four ribonucleotide triphosphates. This chain is CTP synthase, found in Lactobacillus helveticus (strain DPC 4571).